A 384-amino-acid chain; its full sequence is Acetylornithine aminotransferase (384 aa).

Residues 95–96 and Phe122 each bind pyridoxal 5'-phosphate; that span reads GA. Arg125 is a binding site for N(2)-acetyl-L-ornithine. Pyridoxal 5'-phosphate is bound at residue 207–210; it reads DEIQ. Residue Lys236 is modified to N6-(pyridoxal phosphate)lysine. Ser264 lines the N(2)-acetyl-L-ornithine pocket. A pyridoxal 5'-phosphate-binding site is contributed by Thr265.

Belongs to the class-III pyridoxal-phosphate-dependent aminotransferase family. ArgD subfamily. In terms of assembly, homodimer. Pyridoxal 5'-phosphate is required as a cofactor.

The protein localises to the cytoplasm. It catalyses the reaction N(2)-acetyl-L-ornithine + 2-oxoglutarate = N-acetyl-L-glutamate 5-semialdehyde + L-glutamate. Its pathway is amino-acid biosynthesis; L-arginine biosynthesis; N(2)-acetyl-L-ornithine from L-glutamate: step 4/4. The protein is Acetylornithine aminotransferase of Halalkalibacterium halodurans (strain ATCC BAA-125 / DSM 18197 / FERM 7344 / JCM 9153 / C-125) (Bacillus halodurans).